Here is a 114-residue protein sequence, read N- to C-terminus: Nucleoid-associated protein slr1847 (114 aa).

This sequence belongs to the YbaB/EbfC family. Homodimer.

The protein localises to the cytoplasm. The protein resides in the nucleoid. Its function is as follows. Binds to DNA and alters its conformation. May be involved in regulation of gene expression, nucleoid organization and DNA protection. The polypeptide is Nucleoid-associated protein slr1847 (Synechocystis sp. (strain ATCC 27184 / PCC 6803 / Kazusa)).